The sequence spans 435 residues: MTTFSPREIVSELDRHIIGQHDAKRAVAIALRNRWRRQQLDESLRDEVMPKNILMIGPTGVGKTEISRRLAKLAGAPFIKVEATKFTEVGYVGRDVEQIIRDLVEIGIGLVREKKRAEVQAKAHQSAEERVLDALVGSTASPGTRESFRKKLRDGELDDKEIDIEVADSGSGMPGFEIPGMPGANIGVLNLSEMFGKAMGGRTKKVRTTVSKSYTDLVRDESDKLLDNEMIQREAVKSVENDGIVFLDEIDKIAARDGGMGAGVSREGVQRDLLPLVEGTTVSTKYGPVKTDHVLFIASGAFHVAKPSDLLPELQGRLPIRVELKPLTKEDFRRILTETEASLIRQYKALMATEELDLDFTDDAIDALADVAVHLNSSVENIGARRLQTVMERVLDEISFNAPDRGGSAVKIDQEYVKKHVGDLAADTDLSRYIL.

ATP-binding positions include Ile18, 60–65 (GVGKTE), Asp248, Glu313, and Arg385.

It belongs to the ClpX chaperone family. HslU subfamily. In terms of assembly, a double ring-shaped homohexamer of HslV is capped on each side by a ring-shaped HslU homohexamer. The assembly of the HslU/HslV complex is dependent on binding of ATP.

It is found in the cytoplasm. Functionally, ATPase subunit of a proteasome-like degradation complex; this subunit has chaperone activity. The binding of ATP and its subsequent hydrolysis by HslU are essential for unfolding of protein substrates subsequently hydrolyzed by HslV. HslU recognizes the N-terminal part of its protein substrates and unfolds these before they are guided to HslV for hydrolysis. The chain is ATP-dependent protease ATPase subunit HslU from Agrobacterium fabrum (strain C58 / ATCC 33970) (Agrobacterium tumefaciens (strain C58)).